The primary structure comprises 262 residues: Hydroxyethylthiazole kinase (262 aa).

Met50 lines the substrate pocket. ATP contacts are provided by Arg125 and Thr171. Position 198 (Gly198) interacts with substrate.

This sequence belongs to the Thz kinase family. It depends on Mg(2+) as a cofactor.

It catalyses the reaction 5-(2-hydroxyethyl)-4-methylthiazole + ATP = 4-methyl-5-(2-phosphooxyethyl)-thiazole + ADP + H(+). It participates in cofactor biosynthesis; thiamine diphosphate biosynthesis; 4-methyl-5-(2-phosphoethyl)-thiazole from 5-(2-hydroxyethyl)-4-methylthiazole: step 1/1. Catalyzes the phosphorylation of the hydroxyl group of 4-methyl-5-beta-hydroxyethylthiazole (THZ). This Escherichia coli (strain K12 / MC4100 / BW2952) protein is Hydroxyethylthiazole kinase.